The primary structure comprises 130 residues: Small ribosomal subunit protein uS9 (130 aa).

Belongs to the universal ribosomal protein uS9 family.

This chain is Small ribosomal subunit protein uS9, found in Paraburkholderia phymatum (strain DSM 17167 / CIP 108236 / LMG 21445 / STM815) (Burkholderia phymatum).